The primary structure comprises 267 residues: tRNA pseudouridine synthase A (267 aa).

D53 (nucleophile) is an active-site residue. Residue Y114 coordinates substrate.

Belongs to the tRNA pseudouridine synthase TruA family. Homodimer.

It catalyses the reaction uridine(38/39/40) in tRNA = pseudouridine(38/39/40) in tRNA. Functionally, formation of pseudouridine at positions 38, 39 and 40 in the anticodon stem and loop of transfer RNAs. The chain is tRNA pseudouridine synthase A from Chlamydia trachomatis serovar L2b (strain UCH-1/proctitis).